Consider the following 157-residue polypeptide: Cytochrome P450 monooxygenase atG (157 aa).

Heme is bound at residue Cys-97.

This sequence belongs to the cytochrome P450 family. Heme serves as cofactor.

Its pathway is secondary metabolite biosynthesis. Its function is as follows. Cytochrome P450 monooxygenase; part of the gene cluster that mediates the biosynthesis of terreic acid, a quinone epoxide inhibitor of Bruton's tyrosine kinase (BTK). The first step of the pathway is the synthesis of 6-methylsalicylic acid (6-MSA) by the 6-methylsalicylic acid synthase atX. In the biosynthesis of 6-MSA, atX utilizes one acetyl-CoA and three malonyl-CoAs as its substrates and catalyzes a series of programmed reactions including Claisen condensation, reduction, aldol cyclization, and the hydrolytic cleavage that yields 6-MSA. The 6-methylsalicylate 1-monooxygenase atA then catalyzes the decarboxylative hydroxylation of 6-MSA to 3-methylcatechol. The next step is the conversion of 3-methylcatechol to 3-methyl-1,2,4-benzenetriol by cytochrome P450 monooxygenase atE, which is enhanced by cytochrome P450 monooxygenase atG. Then, the epoxidase atD catalyzes the epoxidation and hydroxyl oxidation of 3-methyl-1,2,4-benzenetriol to terremutin. Lastly, GMC oxidoreductase atC oxidizes terremutin to terreic acid. This chain is Cytochrome P450 monooxygenase atG, found in Aspergillus terreus (strain NIH 2624 / FGSC A1156).